The chain runs to 157 residues: Transcription elongation factor GreA (157 aa).

Positions 46-67 form a coiled coil; the sequence is AEYHAARERQSFIEGRIKELED.

Belongs to the GreA/GreB family.

Necessary for efficient RNA polymerase transcription elongation past template-encoded arresting sites. The arresting sites in DNA have the property of trapping a certain fraction of elongating RNA polymerases that pass through, resulting in locked ternary complexes. Cleavage of the nascent transcript by cleavage factors such as GreA or GreB allows the resumption of elongation from the new 3'terminus. GreA releases sequences of 2 to 3 nucleotides. The chain is Transcription elongation factor GreA from Rhodospirillum rubrum (strain ATCC 11170 / ATH 1.1.1 / DSM 467 / LMG 4362 / NCIMB 8255 / S1).